We begin with the raw amino-acid sequence, 504 residues long: GTPase Obg (504 aa).

One can recognise an Obg domain in the interval 2 to 159 (SQFVDRVVLH…KDVTLELKSM (158 aa)). Positions 68–88 (AERGNNGAGDDRHGARGKDLT) are disordered. The OBG-type G domain occupies 160 to 340 (ADVGLVGFPS…LRFALMDIVR (181 aa)). GTP is bound by residues 166-173 (GFPSAGKS), 191-195 (FTTLA), 212-215 (DVPG), 292-295 (NKMD), and 321-323 (STV). Mg(2+) contacts are provided by Ser173 and Thr193. The OCT domain maps to 364–444 (KRKGRFADFE…IGGITFEWDP (81 aa)). Residues 449 to 481 (GVDQTPAYGRGKDRRLEQTDRVTAEQRKRASQA) form a disordered region. The segment covering 458-476 (RGKDRRLEQTDRVTAEQRK) has biased composition (basic and acidic residues).

It belongs to the TRAFAC class OBG-HflX-like GTPase superfamily. OBG GTPase family. Monomer. Mg(2+) is required as a cofactor.

It is found in the cytoplasm. An essential GTPase which binds GTP, GDP and possibly (p)ppGpp with moderate affinity, with high nucleotide exchange rates and a fairly low GTP hydrolysis rate. Plays a role in control of the cell cycle, stress response, ribosome biogenesis and in those bacteria that undergo differentiation, in morphogenesis control. In Corynebacterium urealyticum (strain ATCC 43042 / DSM 7109), this protein is GTPase Obg.